The sequence spans 582 residues: Semenogelin-2 (582 aa).

Residues 1–23 (MKSIILFVLSLLLILEKQAAVMG) form the signal peptide. 5 disordered regions span residues 25–62 (KGGS…SKGS), 131–156 (KGGQ…KGIF), 173–192 (KEQA…GSQS), 272–477 (NLNQ…EQRQ), and 502–554 (VEGK…SGAH). Residues 50–59 (GQKDKQHTES) are compositionally biased toward basic and acidic residues. Composition is skewed to polar residues over residues 137-151 (HGTQ…NSPS) and 174-192 (EQAS…GSQS). The span at 292 to 310 (RTEERQLNHGEKSVQKDVS) shows a compositional bias: basic and acidic residues. Polar residues predominate over residues 325 to 335 (KSQNQVTIPSQ). A compositionally biased stretch (basic and acidic residues) spans 336 to 345 (DQEHGHKENK). A compositionally biased stretch (polar residues) spans 385-395 (KSQNQVTIPSQ). The span at 396–405 (DQEHGHKENK) shows a compositional bias: basic and acidic residues. Positions 445-455 (KSQNQVTIPSQ) are enriched in polar residues. Basic and acidic residues predominate over residues 456–465 (DQEHGHKENK). Composition is skewed to polar residues over residues 466-477 (ISYQSSSTEQRQ) and 506-529 (SQIQ…NSGK). Residues 537–546 (LLSHEQEGRY) are compositionally biased toward basic and acidic residues.

The protein belongs to the semenogelin family. In terms of assembly, interacts with SERPINA5.

It is found in the secreted. Functionally, participates in the formation of a gel matrix (sperm coagulum) entrapping the accessory gland secretions and ejaculated spermatozoa. The sequence is that of Semenogelin-2 (SEMG2) from Macaca nemestrina (Pig-tailed macaque).